We begin with the raw amino-acid sequence, 354 residues long: 3-dehydroquinate synthase (354 aa).

Residues 106-110 (GVIGD), 130-131 (TS), lysine 143, and lysine 152 contribute to the NAD(+) site. Zn(2+) is bound by residues glutamate 185, histidine 246, and histidine 262.

This sequence belongs to the sugar phosphate cyclases superfamily. Dehydroquinate synthase family. Co(2+) is required as a cofactor. The cofactor is Zn(2+). It depends on NAD(+) as a cofactor.

It is found in the cytoplasm. It carries out the reaction 7-phospho-2-dehydro-3-deoxy-D-arabino-heptonate = 3-dehydroquinate + phosphate. It functions in the pathway metabolic intermediate biosynthesis; chorismate biosynthesis; chorismate from D-erythrose 4-phosphate and phosphoenolpyruvate: step 2/7. Catalyzes the conversion of 3-deoxy-D-arabino-heptulosonate 7-phosphate (DAHP) to dehydroquinate (DHQ). In Leuconostoc mesenteroides subsp. mesenteroides (strain ATCC 8293 / DSM 20343 / BCRC 11652 / CCM 1803 / JCM 6124 / NCDO 523 / NBRC 100496 / NCIMB 8023 / NCTC 12954 / NRRL B-1118 / 37Y), this protein is 3-dehydroquinate synthase.